Reading from the N-terminus, the 199-residue chain is Small ribosomal subunit protein uS5 (199 aa).

Residues 1-29 (MATAGRRGGAASERRERRESRRQEASPEK) form a disordered region. The span at 12–27 (SERRERRESRRQEASP) shows a compositional bias: basic and acidic residues. The S5 DRBM domain maps to 32 to 95 (FLERVVTINR…EEAKKHFFTV (64 aa)).

The protein belongs to the universal ribosomal protein uS5 family. In terms of assembly, part of the 30S ribosomal subunit. Contacts proteins S4 and S8.

With S4 and S12 plays an important role in translational accuracy. Functionally, located at the back of the 30S subunit body where it stabilizes the conformation of the head with respect to the body. In Acidothermus cellulolyticus (strain ATCC 43068 / DSM 8971 / 11B), this protein is Small ribosomal subunit protein uS5.